A 20-amino-acid chain; its full sequence is SXAAVVEPPETSQNRIAKGE.

The tract at residues 1-20 (SXAAVVEPPETSQNRIAKGE) is disordered. The span at 10–20 (ETSQNRIAKGE) shows a compositional bias: polar residues.

As to quaternary structure, dimer of 18 kDa and 60 kDa subunit.

Its subcellular location is the microsome membrane. The protein localises to the endoplasmic reticulum membrane. May have spermidine-binding activity. This Zea mays (Maize) protein is Putative 60 kDa spermidine-binding protein.